A 56-amino-acid polypeptide reads, in one-letter code: PI-actitoxin-Afv2b (56 aa).

Positions 5-55 (CLLPMKVGPCRARVPRFYYNSSSGKCEGFTYGGCGANANKFQTKAQCEKAC) constitute a BPTI/Kunitz inhibitor domain. 3 disulfide bridges follow: Cys-5/Cys-55, Cys-14/Cys-38, and Cys-30/Cys-51.

Belongs to the venom Kunitz-type family. Sea anemone type 2 potassium channel toxin subfamily. As to expression, expressed by acrorhagi.

Its subcellular location is the secreted. The protein localises to the nematocyst. Serine protease inhibitor that is strongly active against trypsin (900 IU/mg) and moderately active against plasmin. The protein is PI-actitoxin-Afv2b of Anthopleura fuscoviridis (Sea anemone).